A 217-amino-acid polypeptide reads, in one-letter code: Formate dehydrogenase, nitrate-inducible, cytochrome b556(Fdn) subunit (217 aa).

Residues 1–11 (MSKSKMIVRTK) are Cytoplasmic-facing. Residues 12–36 (FIDRACHWTVVICFFLVALSGISFF) form a helical membrane-spanning segment. Heme b is bound at residue His-18. The Periplasmic segment spans residues 37–52 (FPTLQWLTQTFGTPQM). The chain crosses the membrane as a helical span at residues 53–74 (GRILHPFFGIAIFVALMFMFVR). Residue His-57 coordinates heme b. Over 75–110 (FVHHNIPDKKDIPWLLNIVEVLKGNEHKVADVGKYN) the chain is Cytoplasmic. Residues 111–134 (AGQKMMFWSIMSMIFVLLVTGVII) form a helical membrane-spanning segment. Over 135–150 (WRPYFAQYFPMQVVRY) the chain is Periplasmic. Residues 151 to 175 (SLLIHAAAGIILIHAILIHMYMAFW) form a helical membrane-spanning segment. 2 residues coordinate heme b: His-155 and His-169. His-169 lines the a menaquinone pocket. The Cytoplasmic portion of the chain corresponds to 176-217 (VKGSIKGMIEGKVSRRWAKKHHPRWYREIEKAEAKKESEEGI).

The protein belongs to the formate dehydrogenase gamma subunit family. As to quaternary structure, trimer of heterotrimers, consisting of subunits alpha, beta and gamma. Requires heme as cofactor.

The protein resides in the cell inner membrane. In terms of biological role, formate dehydrogenase allows the bacterium to use formate as major electron donor during anaerobic respiration, when nitrate is used as electron acceptor. Subunit gamma is the cytochrome b556 component of the formate dehydrogenase-N, and also contains a menaquinone reduction site that receives electrons from the beta subunit (FdnH), through its hemes. Formate dehydrogenase-N is part of a system that generates proton motive force, together with the dissimilatory nitrate reductase (Nar). This chain is Formate dehydrogenase, nitrate-inducible, cytochrome b556(Fdn) subunit (fdnI), found in Escherichia coli O157:H7.